Here is a 299-residue protein sequence, read N- to C-terminus: Protease HtpX homolog (299 aa).

2 helical membrane-spanning segments follow: residues 15-35 (ILLLVFFLLLALVGYAVGYLF) and 39-59 (GLGGLVIALIIGFIYALSMIF). Histidine 143 lines the Zn(2+) pocket. Glutamate 144 is an active-site residue. Histidine 147 lines the Zn(2+) pocket. Helical transmembrane passes span 158–178 (IAVALASAITMLSSMAGRMMW) and 198–218 (IIMLVVSLLAIVLAPLAATLV). Residue glutamate 227 coordinates Zn(2+).

This sequence belongs to the peptidase M48B family. Zn(2+) serves as cofactor.

The protein resides in the cell membrane. The protein is Protease HtpX homolog of Streptococcus pneumoniae serotype 4 (strain ATCC BAA-334 / TIGR4).